Here is a 343-residue protein sequence, read N- to C-terminus: Tetraacyldisaccharide 4'-kinase (343 aa).

65–72 (HAGGTGKT) provides a ligand contact to ATP.

This sequence belongs to the LpxK family.

It carries out the reaction a lipid A disaccharide + ATP = a lipid IVA + ADP + H(+). Its pathway is glycolipid biosynthesis; lipid IV(A) biosynthesis; lipid IV(A) from (3R)-3-hydroxytetradecanoyl-[acyl-carrier-protein] and UDP-N-acetyl-alpha-D-glucosamine: step 6/6. Functionally, transfers the gamma-phosphate of ATP to the 4'-position of a tetraacyldisaccharide 1-phosphate intermediate (termed DS-1-P) to form tetraacyldisaccharide 1,4'-bis-phosphate (lipid IVA). This Neisseria gonorrhoeae (strain ATCC 700825 / FA 1090) protein is Tetraacyldisaccharide 4'-kinase.